A 370-amino-acid polypeptide reads, in one-letter code: Anhydro-N-acetylmuramic acid kinase (370 aa).

13–20 (GTSLDGVD) serves as a coordination point for ATP.

This sequence belongs to the anhydro-N-acetylmuramic acid kinase family.

It carries out the reaction 1,6-anhydro-N-acetyl-beta-muramate + ATP + H2O = N-acetyl-D-muramate 6-phosphate + ADP + H(+). The protein operates within amino-sugar metabolism; 1,6-anhydro-N-acetylmuramate degradation. It participates in cell wall biogenesis; peptidoglycan recycling. In terms of biological role, catalyzes the specific phosphorylation of 1,6-anhydro-N-acetylmuramic acid (anhMurNAc) with the simultaneous cleavage of the 1,6-anhydro ring, generating MurNAc-6-P. Is required for the utilization of anhMurNAc either imported from the medium or derived from its own cell wall murein, and thus plays a role in cell wall recycling. This is Anhydro-N-acetylmuramic acid kinase from Vibrio cholerae serotype O1 (strain ATCC 39315 / El Tor Inaba N16961).